We begin with the raw amino-acid sequence, 1511 residues long: MPEAKLNNNVNDVTSYSSASSSTENAADLHNYNGFDEHTEARIQKLARTLTAQSMQNSTQSAPNKSDAQSIFSSGVEGVNPIFSDPEAPGYDPKLDPNSENFSSAAWVKNMAHLSAADPDFYKPYSLGCAWKNLSASGASADVAYQSTVVNIPYKILKSGLRKFQRSKETNTFQILKPMDGCLNPGELLVVLGRPGSGCTTLLKSISSNTHGFDLGADTKISYSGYSGDDIKKHFRGEVVYNAEADVHLPHLTVFETLVTVARLKTPQNRIKGVDRESYANHLAEVAMATYGLSHTRNTKVGNDIVRGVSGGERKRVSIAEVSICGSKFQCWDNATRGLDSATALEFIRALKTQADISNTSATVAIYQCSQDAYDLFNKVCVLDDGYQIYYGPADKAKKYFEDMGYVCPSRQTTADFLTSVTSPSERTLNKDMLKKGIHIPQTPKEMNDYWVKSPNYKELMKEVDQRLLNDDEASREAIKEAHIAKQSKRARPSSPYTVSYMMQVKYLLIRNMWRLRNNIGFTLFMILGNCSMALILGSMFFKIMKKGDTSTFYFRGSAMFFAILFNAFSSLLEIFSLYEARPITEKHRTYSLYHPSADAFASVLSEIPSKLIIAVCFNIIFYFLVDFRRNGGVFFFYLLINIVAVFSMSHLFRCVGSLTKTLSEAMVPASMLLLALSMYTGFAIPKKKILRWSKWIWYINPLAYLFESLLINEFHGIKFPCAEYVPRGPAYANISSTESVCTVVGAVPGQDYVLGDDFIRGTYQYYHKDKWRGFGIGMAYVVFFFFVYLFLCEYNEGAKQKGEILVFPRSIVKRMKKRGVLTEKNANDPENVGERSDLSSDRKMLQESSEEESDTYGEIGLSKSEAIFHWRNLCYEVQIKAETRRILNNVDGWVKPGTLTALMGASGAGKTTLLDCLAERVTMGVITGDILVNGIPRDKSFPRSIGYCQQQDLHLKTATVRESLRFSAYLRQPAEVSIEEKNRYVEEVIKILEMEKYADAVVGVAGEGLNVEQRKRLTIGVELTAKPKLLVFLDEPTSGLDSQTAWSICQLMKKLANHGQAILCTIHQPSAILMQEFDRLLFMQRGGKTVYFGDLGEGCKTMIDYFESHGAHKCPADANPAEWMLEVVGAAPGSHANQDYYEVWRNSEEYRAVQSELDWMERELPKKGSITAAEDKHEFSQSIIYQTKLVSIRLFQQYWRSPDYLWSKFILTIFNQLFIGFTFFKAGTSLQGLQNQMLAVFMFTVIFNPILQQYLPSFVQQRDLYEARERPSRTFSWISFIFAQIFVEVPWNILAGTIAYFIYYYPIGFYSNASAAGQLHERGALFWLFSCAFYVYVGSMGLLVISFNQVAESAANLASLLFTMSLSFCGVMTTPSAMPRFWIFMYRVSPLTYFIQALLAVGVANVDVKCADYELLEFTPPSGMTCGQYMEPYLQLAKTGYLTDENATDTCSFCQISTTNDYLANVNSFYSERWRNYGIFICYIAFNYIAGVFFYWLARVPKKNGKLSKK.

The span at 1-14 (MPEAKLNNNVNDVT) shows a compositional bias: polar residues. Residues 1 to 32 (MPEAKLNNNVNDVTSYSSASSSTENAADLHNY) form a disordered region. The Cytoplasmic portion of the chain corresponds to 1-517 (MPEAKLNNNV…LLIRNMWRLR (517 aa)). Position 22 is a phosphoserine (Ser22). 2 positions are modified to phosphothreonine: Thr49 and Thr51. The tract at residues 52-71 (AQSMQNSTQSAPNKSDAQSI) is disordered. Residues Ser54, Ser58, and Ser61 each carry the phosphoserine modification. An ABC transporter 1 domain is found at 161–410 (LRKFQRSKET…FEDMGYVCPS (250 aa)). The chain crosses the membrane as a helical span at residues 518–542 (NNIGFTLFMILGNCSMALILGSMFF). Residues 543–558 (KIMKKGDTSTFYFRGS) are Extracellular-facing. A helical membrane pass occupies residues 559–579 (AMFFAILFNAFSSLLEIFSLY). The Cytoplasmic segment spans residues 580–611 (EARPITEKHRTYSLYHPSADAFASVLSEIPSK). The helical transmembrane segment at 612–628 (LIIAVCFNIIFYFLVDF) threads the bilayer. The Extracellular portion of the chain corresponds to 629-631 (RRN). Residues 632–650 (GGVFFFYLLINIVAVFSMS) traverse the membrane as a helical segment. At 651–665 (HLFRCVGSLTKTLSE) the chain is on the cytoplasmic side. The helical transmembrane segment at 666–685 (AMVPASMLLLALSMYTGFAI) threads the bilayer. Over 686 to 774 (PKKKILRWSK…QYYHKDKWRG (89 aa)) the chain is Extracellular. Asn734 is a glycosylation site (N-linked (GlcNAc...) asparagine). A helical membrane pass occupies residues 775 to 793 (FGIGMAYVVFFFFVYLFLC). At 794-1237 (EYNEGAKQKG…GTSLQGLQNQ (444 aa)) the chain is on the cytoplasmic side. Residues 824–858 (EKNANDPENVGERSDLSSDRKMLQESSEEESDTYG) form a disordered region. Lys825 is covalently cross-linked (Glycyl lysine isopeptide (Lys-Gly) (interchain with G-Cter in ubiquitin)). Positions 833 to 846 (VGERSDLSSDRKML) are enriched in basic and acidic residues. 6 positions are modified to phosphoserine: Ser837, Ser840, Ser841, Ser849, Ser850, and Ser854. In terms of domain architecture, ABC transporter 2 spans 869 to 1112 (FHWRNLCYEV…MIDYFESHGA (244 aa)). ATP is bound at residue 905–912 (GASGAGKT). Residues 1238 to 1260 (MLAVFMFTVIFNPILQQYLPSFV) traverse the membrane as a helical segment. Residues 1261–1291 (QQRDLYEARERPSRTFSWISFIFAQIFVEVP) are Extracellular-facing. A helical transmembrane segment spans residues 1292–1313 (WNILAGTIAYFIYYYPIGFYSN). At 1314–1324 (ASAAGQLHERG) the chain is on the cytoplasmic side. A helical transmembrane segment spans residues 1325-1349 (ALFWLFSCAFYVYVGSMGLLVISFN). At 1350-1354 (QVAES) the chain is on the extracellular side. The chain crosses the membrane as a helical span at residues 1355–1379 (AANLASLLFTMSLSFCGVMTTPSAM). Topologically, residues 1380 to 1388 (PRFWIFMYR) are cytoplasmic. The chain crosses the membrane as a helical span at residues 1389–1407 (VSPLTYFIQALLAVGVANV). Over 1408 to 1476 (DVKCADYELL…VNSFYSERWR (69 aa)) the chain is Extracellular. The N-linked (GlcNAc...) asparagine glycan is linked to Asn1447. The helical transmembrane segment at 1477-1499 (NYGIFICYIAFNYIAGVFFYWLA) threads the bilayer. Residues 1500-1511 (RVPKKNGKLSKK) lie on the Cytoplasmic side of the membrane.

Belongs to the ABC transporter superfamily. ABCG family. PDR (TC 3.A.1.205) subfamily. Ubiquitinylation mediates endocytosis and vacuolar degradation. Phosphorylation by casein kinase I stabilizes the protein half-life.

It is found in the cell membrane. With respect to regulation, FK506, isonitrile, enniatin, RU49953, kitasatospora E420, staurosporine CGP42700, prenyl-flavonoids, D-octapeptides were found to be inhibitors in vivo. Vanadate and oligomycin were found to be inhibitors in vitro. Its function is as follows. Active efflux of weakly charged organic compounds of 90 cubic Angstroms to 300 cubic Angstroms surface volume. Confers resistance to numerous chemicals including cycloheximide, sulfomethuron methyl, steroids, antiseptics, antibiotics, anticancer, herbicides, mycotoxins, insecticides, ionophores, alkaloids, flavonoids, phenothiazines, organotin compounds, carbazoles, lysosomotropic aminoesters, detergents, rhodamines and other fluorophores, azoles and other antifungals. Exhibits nucleoside triphosphatase activity. This chain is Pleiotropic ABC efflux transporter of multiple drugs (PDR5), found in Saccharomyces cerevisiae (strain ATCC 204508 / S288c) (Baker's yeast).